Reading from the N-terminus, the 211-residue chain is Prolactin (211 aa).

The first 24 residues, 1 to 24 (MTHRRTKLFMMAAVVSYVMTSCGA), serve as a signal peptide directing secretion. 2 disulfide bridges follow: cysteine 70–cysteine 184 and cysteine 201–cysteine 211.

The protein belongs to the somatotropin/prolactin family.

Its subcellular location is the secreted. This chain is Prolactin (prl), found in Paralichthys olivaceus (Bastard halibut).